The following is a 180-amino-acid chain: UPF0690 protein C1orf52 homolog (180 aa).

Disordered stretches follow at residues 1–66 and 96–180; these read MAAE…SVTR and KIWK…KKKK. Positions 48-61 are enriched in basic and acidic residues; it reads KQAEKRLPGPDELF. The residue at position 65 (Thr-65) is a Phosphothreonine. Position 130 is a phosphotyrosine (Tyr-130). Residues 149–160 show a composition bias toward acidic residues; sequence EGEETVESDDDK. A Phosphoserine modification is found at Ser-156. Residues 161 to 180 show a composition bias toward basic and acidic residues; it reads DERASKIRRVEPGEAAKKKK.

It belongs to the UPF0690 family.

The chain is UPF0690 protein C1orf52 homolog from Mus musculus (Mouse).